Reading from the N-terminus, the 1029-residue chain is E3 ubiquitin-protein ligase UPL6 (1029 aa).

Residues 1 to 20 form a disordered region; sequence MFFSGDPSTRKRVDLGGRST. A compositionally biased stretch (basic and acidic residues) spans 8–20; sequence STRKRVDLGGRST. The 30-residue stretch at 45–74 folds into the IQ domain; sequence QNSAALKIQKFFRGRRSMAIERSKVRHDFC. An HECT domain is found at 688–1029; it reads SEDDLRSSIR…ISAEAGFDLS (342 aa). Residue Cys-997 is the Glycyl thioester intermediate of the active site.

Belongs to the UPL family.

It carries out the reaction S-ubiquitinyl-[E2 ubiquitin-conjugating enzyme]-L-cysteine + [acceptor protein]-L-lysine = [E2 ubiquitin-conjugating enzyme]-L-cysteine + N(6)-ubiquitinyl-[acceptor protein]-L-lysine.. It functions in the pathway protein modification; protein ubiquitination. Probable E3 ubiquitin-protein ligase which mediates ubiquitination and subsequent proteasomal degradation of target proteins. The chain is E3 ubiquitin-protein ligase UPL6 (UPL6) from Arabidopsis thaliana (Mouse-ear cress).